The sequence spans 612 residues: Probable serine/threonine-protein kinase WNK4 (612 aa).

In terms of domain architecture, Protein kinase spans 25-282; the sequence is IRYNEVLGRG…AKELLQDPFL (258 aa). ATP is bound by residues 105–108 and Lys-155; that span reads TELF. Asp-172 functions as the Proton acceptor in the catalytic mechanism.

Belongs to the protein kinase superfamily. Ser/Thr protein kinase family. WNK subfamily.

The enzyme catalyses L-seryl-[protein] + ATP = O-phospho-L-seryl-[protein] + ADP + H(+). It catalyses the reaction L-threonyl-[protein] + ATP = O-phospho-L-threonyl-[protein] + ADP + H(+). In Oryza sativa subsp. japonica (Rice), this protein is Probable serine/threonine-protein kinase WNK4 (WNK4).